We begin with the raw amino-acid sequence, 319 residues long: Probable alcohol dehydrogenase (319 aa).

Zn(2+) is bound by residues cysteine 18, histidine 39, cysteine 68, cysteine 71, cysteine 74, cysteine 82, and cysteine 149.

It belongs to the zinc-containing alcohol dehydrogenase family. It depends on Zn(2+) as a cofactor.

It catalyses the reaction a primary alcohol + NAD(+) = an aldehyde + NADH + H(+). The enzyme catalyses a secondary alcohol + NAD(+) = a ketone + NADH + H(+). The chain is Probable alcohol dehydrogenase (terPD) from Pseudomonas sp.